The primary structure comprises 797 residues: Plakophilin-3 (797 aa).

Residues 56-82 (QLGQQPRHNGAAEPEPEAETARGTSRG) form a disordered region. Residue arginine 81 is modified to Omega-N-methylarginine. Phosphoserine occurs at positions 123, 180, and 183. Phosphotyrosine; by SRC is present on tyrosine 195. Phosphoserine occurs at positions 238 and 240. A Phosphothreonine modification is found at threonine 250. At arginine 261 the chain carries Omega-N-methylarginine. The segment at 283–288 (SLSLSL) is required for interaction with SFN. Serine 285, serine 313, serine 314, and serine 331 each carry phosphoserine. The required for interaction with GSK3B stretch occupies residues 294 to 724 (LPDVHGFNSY…AEVLVNIIAV (431 aa)). ARM repeat units lie at residues 305–348 (SHRT…HKCY), 351–390 (AAAK…NLIY), 393–432 (ADNK…NLSS), 449–487 (TDLV…NLSS), 491–536 (ATRQ…NLSY), 596–637 (PKGL…NITA), 645–684 (VLSR…NLSR), and 689–730 (KDEM…NLVV). Residues 516 to 797 (AGKCEDKSVE…GYRKEDFLGP (282 aa)) form a required for binding to PKP2 mRNA region.

This sequence belongs to the beta-catenin family. Found in a complex composed of CDH1, RAP1A and PKP3; PKP3 acts as a scaffold protein within the complex, the complex is required for CDH1 localization to mature desmosome cell junctions. Interacts with FXR1; the interaction facilitates the binding of PKP3 to PKP2 mRNA. Interacts (via ARM repeats) with GSK3B; the interaction may be involved in PKP3 protein degradation. Interacts with hyperphosphorylated and hypophosphorylated RB1; the interaction inhibits RB1 interaction with and repression of the transcription factor E2F1, potentially via sequestering RB1 to the cytoplasm. Interacts with CDKN1A; the interaction sequesters CDKN1A to the cytoplasm thereby repressing its role as an inhibitor of CDK4- and CDK6-driven RB1 phosphorylation. Interacts (via N-terminus) with SFN; the interaction maintains the cytoplasmic pool of PKP3, facilitates PKP3 exchange at desmosomes and restricts PKP3 localization to existing desmosome cell junctions. Interacts (via N-terminus) with JUP; the interaction is required for PKP3 localization to desmosome cell-cell junctions. Post-translationally, phosphorylated at Ser-285 when localized to the cytoplasm, PKP3 at desmosome cell junctions is not phosphorylated. Phosphorylation at Try-195 by SRC is induced by reactive oxygen species and potentially acts as a release mechanism from desmosome cell-cell junctions. In terms of tissue distribution, expressed in the epidermis of the skin, in squamous non-cornifying epithelial cells in the vagina, single layer epithelia of the duodenum and pancreas acini and non-epithelial dendritic reticulum cells of lymph node follicles (at protein level). Expressed in the oral cavity mucosa, epidermis and small intestine epithelium (at protein level). As to expression, expressed in the oral cavity mucosa and epithelial cells of the crypts and villi in the small intestine (at protein level). Expressed in the epidermis with more abundant expression found in the basal and low spinous cells (at protein level).

It localises to the nucleus. The protein resides in the cell junction. Its subcellular location is the desmosome. It is found in the cytoplasm. The protein localises to the cell membrane. It localises to the adherens junction. A component of desmosome cell-cell junctions which are required for positive regulation of cellular adhesion. Required for the localization of DSG2, DSP and PKP2 to mature desmosome junctions. May also play a role in the maintenance of DSG3 protein abundance in keratinocytes. Required for the formation of DSP-containing desmosome precursors in the cytoplasm during desmosome assembly. Also regulates the accumulation of CDH1 to mature desmosome junctions, via cAMP-dependent signaling and its interaction with activated RAP1A. Positively regulates the stabilization of PKP2 mRNA and therefore protein abundance, via its interaction with FXR1, may also regulate the protein abundance of DSP via the same mechanism. May also regulate the protein abundance of the desmosome component PKP1. Required for the organization of desmosome junctions at intercellular borders between basal keratinocytes of the epidermis, as a result plays a role in maintenance of the dermal barrier and regulation of the dermal inflammatory response. Required during epidermal keratinocyte differentiation for cell adherence at tricellular cell-cell contacts, via regulation of the timely formation of adherens junctions and desmosomes in a calcium-dependent manner, and may also play a role in the organization of the intracellular actin fiber belt. Acts as a negative regulator of the inflammatory response in hematopoietic cells of the skin and intestine, via modulation of proinflammatory cytokine production. Important for epithelial barrier maintenance in the intestine to reduce intestinal permeability, thereby plays a role in protection from intestinal-derived endotoxemia. Required for the development of hair follicles, via a role in the regulation of inner root sheaf length, correct alignment and anterior-posterior polarity of hair follicles. Promotes proliferation and cell-cycle G1/S phase transition of keratinocytes. Promotes E2F1-driven transcription of G1/S phase promoting genes by acting to release E2F1 from its inhibitory interaction with RB1, via sequestering RB1 and CDKN1A to the cytoplasm and thereby increasing CDK4- and CDK6-driven phosphorylation of RB1. May act as a scaffold protein to facilitate MAPK phosphorylation of RPS6KA protein family members and subsequently promote downstream EGFR signaling. May play a role in the positive regulation of transcription of Wnt-mediated TCF-responsive target genes. The protein is Plakophilin-3 (PKP3) of Homo sapiens (Human).